The following is a 108-amino-acid chain: UPF0060 membrane protein Sca_1835 (108 aa).

A run of 4 helical transmembrane segments spans residues 5–25 (ILIF…IWLW), 34–54 (FGLL…FQVF), 60–80 (VYAA…YVFD), and 84–104 (PDKY…IMLL).

The protein belongs to the UPF0060 family.

Its subcellular location is the cell membrane. The sequence is that of UPF0060 membrane protein Sca_1835 from Staphylococcus carnosus (strain TM300).